Reading from the N-terminus, the 1181-residue chain is Cellulose synthase-like protein D5 (1181 aa).

Over residues 1 to 17 (MVKSAASQSPSPVTITV) the composition is skewed to polar residues. Disordered regions lie at residues 1–70 (MVKS…DEGR) and 202–229 (KEPY…LPQM). Over residues 48–59 (SSRATRRTSISS) the composition is skewed to low complexity. Acidic residues predominate over residues 210–222 (DDPETEEEDEEDE). 2 consecutive transmembrane segments (helical) span residues 312–332 (AIIS…GLFL) and 343–363 (AMWL…SWLL). D443 is a catalytic residue. Residues 497–542 (VRERRRVKREYDEFKVRINSLPEAIRRRSDAYNVHEELRAKKKQME) adopt a coiled-coil conformation. D884 is an active-site residue. 6 consecutive transmembrane segments (helical) span residues 966–986 (LFLI…QFIV), 991–1011 (ITFL…SLLE), 1038–1058 (PAAV…SFTL), 1082–1102 (FLMV…AVGL), 1116–1136 (LVGG…FAKG), and 1146–1166 (TIVF…WVYI).

Belongs to the glycosyltransferase 2 family. Plant cellulose synthase-like D subfamily. As to expression, expressed in vascular tissues.

The protein localises to the golgi apparatus membrane. Its function is as follows. Involved in stem and root growth. Possesses xylan and homogalacturonan synthase activity. The chain is Cellulose synthase-like protein D5 (CSLD5) from Arabidopsis thaliana (Mouse-ear cress).